A 293-amino-acid chain; its full sequence is MPWIQLKLNTTGSQAEDLSDALVESGAVSVTFQDTHDNPVFEPLPGETLLWGDTDVIGLYDAETDMAEVVAMLEQHPLLGAGFRHKIEQLEDKDWEREWMDNFHPMRFGQRLWICPSWRDVPDPDAVNVMLDPGLAFGTGTHPTTALCLQWLDGLDLAGKTIIDFGCGSGILAIAALKLGAARAIGIDIDPQAIQASRDNAQRNGVSERLELYLPKDQPADLLADVVVANILAGPLRELAPLIGCLPKSGGHLGLSGVLATQAASVAQAYEDKFTLDPVAEREEWCRITGQRK.

The S-adenosyl-L-methionine site is built by Thr-145, Gly-166, Asp-188, and Asn-230.

The protein belongs to the methyltransferase superfamily. PrmA family.

It is found in the cytoplasm. The catalysed reaction is L-lysyl-[protein] + 3 S-adenosyl-L-methionine = N(6),N(6),N(6)-trimethyl-L-lysyl-[protein] + 3 S-adenosyl-L-homocysteine + 3 H(+). Functionally, methylates ribosomal protein L11. The chain is Ribosomal protein L11 methyltransferase from Serratia proteamaculans (strain 568).